The primary structure comprises 503 residues: Cytochrome P450 7A1 (503 aa).

A helical transmembrane segment spans residues Ile-4–Ile-24. Cys-444 is a binding site for heme.

This sequence belongs to the cytochrome P450 family. Heme serves as cofactor.

The protein localises to the endoplasmic reticulum membrane. The protein resides in the microsome membrane. It catalyses the reaction cholesterol + reduced [NADPH--hemoprotein reductase] + O2 = 7alpha-hydroxycholesterol + oxidized [NADPH--hemoprotein reductase] + H2O + H(+). The enzyme catalyses 4beta-hydroxycholesterol + reduced [NADPH--hemoprotein reductase] + O2 = 4beta,7alpha-dihydroxycholesterol + oxidized [NADPH--hemoprotein reductase] + H2O + H(+). The catalysed reaction is lathosterol + reduced [NADPH--hemoprotein reductase] + O2 = 7alpha,8alpha-epoxy-5alpha-cholestan-3beta-ol + oxidized [NADPH--hemoprotein reductase] + H2O + H(+). It carries out the reaction lathosterol + reduced [NADPH--hemoprotein reductase] + O2 = 5alpha-cholestan-7-oxo-3beta-ol + oxidized [NADPH--hemoprotein reductase] + H2O + H(+). It catalyses the reaction 7-dehydrocholesterol + reduced [NADPH--hemoprotein reductase] + O2 = 7-oxocholesterol + oxidized [NADPH--hemoprotein reductase] + H2O + H(+). The enzyme catalyses (24S)-hydroxycholesterol + reduced [NADPH--hemoprotein reductase] + O2 = (24S)-7alpha-dihydroxycholesterol + oxidized [NADPH--hemoprotein reductase] + H2O + H(+). The catalysed reaction is (24R)-hydroxycholesterol + reduced [NADPH--hemoprotein reductase] + O2 = (24R)-7alpha-dihydroxycholesterol + oxidized [NADPH--hemoprotein reductase] + H2O + H(+). The protein operates within lipid metabolism; bile acid biosynthesis. It participates in steroid metabolism; cholesterol degradation. Its function is as follows. A cytochrome P450 monooxygenase involved in the metabolism of endogenous cholesterol and its oxygenated derivatives (oxysterols). Mechanistically, uses molecular oxygen inserting one oxygen atom into a substrate, and reducing the second into a water molecule, with two electrons provided by NADPH via cytochrome P450 reductase (CPR; NADPH-ferrihemoprotein reductase). Functions as a critical regulatory enzyme of bile acid biosynthesis and cholesterol homeostasis. Catalyzes the hydroxylation of carbon hydrogen bond at 7-alpha position of cholesterol, a rate-limiting step in cholesterol catabolism and bile acid biosynthesis. 7-alpha hydroxylates several oxysterols, including 4beta-hydroxycholesterol and 24-hydroxycholesterol. Catalyzes the oxidation of the 7,8 double bond of 7-dehydrocholesterol and lathosterol with direct and predominant formation of the 7-keto derivatives. In Mus musculus (Mouse), this protein is Cytochrome P450 7A1.